Here is a 355-residue protein sequence, read N- to C-terminus: Uroporphyrinogen decarboxylase (355 aa).

Substrate is bound by residues 27–31 (RQAGR), Asp-77, Tyr-154, Thr-209, and His-328.

This sequence belongs to the uroporphyrinogen decarboxylase family. Homodimer.

It is found in the cytoplasm. It carries out the reaction uroporphyrinogen III + 4 H(+) = coproporphyrinogen III + 4 CO2. It participates in porphyrin-containing compound metabolism; protoporphyrin-IX biosynthesis; coproporphyrinogen-III from 5-aminolevulinate: step 4/4. In terms of biological role, catalyzes the decarboxylation of four acetate groups of uroporphyrinogen-III to yield coproporphyrinogen-III. The chain is Uroporphyrinogen decarboxylase from Dechloromonas aromatica (strain RCB).